A 56-amino-acid polypeptide reads, in one-letter code: Large ribosomal subunit protein eL37 (56 aa).

4 residues coordinate Zn(2+): Cys19, Cys22, Cys34, and Cys37. Residues 19 to 37 (CRRCGSVSLNIHTKQCTSC) form a C4-type zinc finger.

Belongs to the eukaryotic ribosomal protein eL37 family. Zn(2+) is required as a cofactor.

Binds to the 23S rRNA. The chain is Large ribosomal subunit protein eL37 from Methanococcoides burtonii (strain DSM 6242 / NBRC 107633 / OCM 468 / ACE-M).